The primary structure comprises 328 residues: Phosphate acetyltransferase (328 aa).

The protein belongs to the phosphate acetyltransferase and butyryltransferase family.

It localises to the cytoplasm. The catalysed reaction is acetyl-CoA + phosphate = acetyl phosphate + CoA. It participates in metabolic intermediate biosynthesis; acetyl-CoA biosynthesis; acetyl-CoA from acetate: step 2/2. This is Phosphate acetyltransferase (pta) from Staphylococcus aureus (strain MRSA252).